A 387-amino-acid chain; its full sequence is Phosphoglycerate kinase (387 aa).

Residues 21-23 (DLN), R36, 59-62 (HLGR), R113, and R146 contribute to the substrate site. Residues K197, E314, and 340-343 (GGDT) contribute to the ATP site.

It belongs to the phosphoglycerate kinase family. In terms of assembly, monomer.

The protein resides in the cytoplasm. The enzyme catalyses (2R)-3-phosphoglycerate + ATP = (2R)-3-phospho-glyceroyl phosphate + ADP. It functions in the pathway carbohydrate degradation; glycolysis; pyruvate from D-glyceraldehyde 3-phosphate: step 2/5. In Pseudomonas fluorescens (strain ATCC BAA-477 / NRRL B-23932 / Pf-5), this protein is Phosphoglycerate kinase.